The following is a 247-amino-acid chain: Proteasome subunit alpha type-7-B (247 aa).

It belongs to the peptidase T1A family. The 26S proteasome consists of a 20S proteasome core and two 19S regulatory subunits. The 20S proteasome core is composed of 28 subunits that are arranged in four stacked rings, resulting in a barrel-shaped structure. The two end rings are each formed by seven alpha subunits, and the two central rings are each formed by seven beta subunits. The catalytic chamber with the active sites is on the inside of the barrel. In terms of processing, phosphorylated in G2 phase.

The protein localises to the cytoplasm. The protein resides in the nucleus. Its function is as follows. The proteasome is a multicatalytic proteinase complex which is characterized by its ability to cleave peptides with Arg, Phe, Tyr, Leu, and Glu adjacent to the leaving group at neutral or slightly basic pH. The proteasome has an ATP-dependent proteolytic activity. The chain is Proteasome subunit alpha type-7-B (psma7-b) from Xenopus laevis (African clawed frog).